The sequence spans 111 residues: Probable 4-amino-4-deoxy-L-arabinose-phosphoundecaprenol flippase subunit ArnE (111 aa).

The next 3 helical transmembrane spans lie at 38 to 58, 61 to 81, and 91 to 111; these read LWLGLALICMGAAMVLWLLVL, LPVGIAYPMLSLNFVWVTLAA, and PRHWLGVALIISGIIILGSAA. Positions 40 to 109 constitute an EamA domain; it reads LGLALICMGA…IISGIIILGS (70 aa).

This sequence belongs to the ArnE family. In terms of assembly, heterodimer of ArnE and ArnF.

It is found in the cell inner membrane. Its pathway is bacterial outer membrane biogenesis; lipopolysaccharide biosynthesis. Translocates 4-amino-4-deoxy-L-arabinose-phosphoundecaprenol (alpha-L-Ara4N-phosphoundecaprenol) from the cytoplasmic to the periplasmic side of the inner membrane. The protein is Probable 4-amino-4-deoxy-L-arabinose-phosphoundecaprenol flippase subunit ArnE of Salmonella paratyphi B (strain ATCC BAA-1250 / SPB7).